The following is a 228-amino-acid chain: Large ribosomal subunit protein uL16 (228 aa).

It belongs to the universal ribosomal protein uL16 family. As to quaternary structure, component of the small ribosomal subunit. Mature ribosomes consist of a small (40S) and a large (60S) subunit. The 40S subunit contains about 33 different proteins and 1 molecule of RNA (18S). The 60S subunit contains about 49 different proteins and 3 molecules of RNA (25S, 5.8S and 5S).

The protein is Large ribosomal subunit protein uL16 (RPL10) of Pinus taeda (Loblolly pine).